The chain runs to 198 residues: Thymidine kinase (198 aa).

Residues Gly-15–Thr-22 and Asp-87–Gln-90 contribute to the ATP site. Residue Glu-88 is the Proton acceptor of the active site. Positions 144, 147, 182, and 185 each coordinate Zn(2+).

The protein belongs to the thymidine kinase family. As to quaternary structure, homotetramer.

It localises to the cytoplasm. The catalysed reaction is thymidine + ATP = dTMP + ADP + H(+). This Coprothermobacter proteolyticus (strain ATCC 35245 / DSM 5265 / OCM 4 / BT) protein is Thymidine kinase.